A 307-amino-acid polypeptide reads, in one-letter code: UDP-N-acetylenolpyruvoylglucosamine reductase (307 aa).

One can recognise an FAD-binding PCMH-type domain in the interval 34–198 (TGGNADFYLS…LEAAFTLEPG (165 aa)). Arg-177 is a catalytic residue. Ser-227 serves as the catalytic Proton donor. Glu-297 is an active-site residue.

It belongs to the MurB family. FAD serves as cofactor.

It is found in the cytoplasm. The catalysed reaction is UDP-N-acetyl-alpha-D-muramate + NADP(+) = UDP-N-acetyl-3-O-(1-carboxyvinyl)-alpha-D-glucosamine + NADPH + H(+). The protein operates within cell wall biogenesis; peptidoglycan biosynthesis. In terms of biological role, cell wall formation. The sequence is that of UDP-N-acetylenolpyruvoylglucosamine reductase from Staphylococcus haemolyticus (strain JCSC1435).